A 332-amino-acid chain; its full sequence is Probable farnesyl diphosphate synthase (332 aa).

The isopentenyl diphosphate site is built by lysine 75, arginine 78, and histidine 107. Mg(2+) contacts are provided by aspartate 114 and aspartate 120. Arginine 125 contacts (2E)-geranyl diphosphate. Arginine 126 serves as a coordination point for isopentenyl diphosphate. (2E)-geranyl diphosphate-binding residues include lysine 208, glutamine 250, and lysine 267.

This sequence belongs to the FPP/GGPP synthase family. Mg(2+) is required as a cofactor.

It is found in the cytoplasm. The catalysed reaction is isopentenyl diphosphate + (2E)-geranyl diphosphate = (2E,6E)-farnesyl diphosphate + diphosphate. The protein is Probable farnesyl diphosphate synthase of Sinorhizobium fredii (strain NBRC 101917 / NGR234).